The primary structure comprises 362 residues: Phosphoserine aminotransferase (362 aa).

Ser-9 and Arg-42 together coordinate L-glutamate. Residues 76-77 (GR), Trp-102, Thr-153, Asp-174, and Gln-197 contribute to the pyridoxal 5'-phosphate site. Lys-198 is subject to N6-(pyridoxal phosphate)lysine. Pyridoxal 5'-phosphate is bound at residue 239–240 (NT).

This sequence belongs to the class-V pyridoxal-phosphate-dependent aminotransferase family. SerC subfamily. As to quaternary structure, homodimer. Pyridoxal 5'-phosphate is required as a cofactor.

The protein resides in the cytoplasm. The enzyme catalyses O-phospho-L-serine + 2-oxoglutarate = 3-phosphooxypyruvate + L-glutamate. It catalyses the reaction 4-(phosphooxy)-L-threonine + 2-oxoglutarate = (R)-3-hydroxy-2-oxo-4-phosphooxybutanoate + L-glutamate. It functions in the pathway amino-acid biosynthesis; L-serine biosynthesis; L-serine from 3-phospho-D-glycerate: step 2/3. The protein operates within cofactor biosynthesis; pyridoxine 5'-phosphate biosynthesis; pyridoxine 5'-phosphate from D-erythrose 4-phosphate: step 3/5. Its function is as follows. Catalyzes the reversible conversion of 3-phosphohydroxypyruvate to phosphoserine and of 3-hydroxy-2-oxo-4-phosphonooxybutanoate to phosphohydroxythreonine. The chain is Phosphoserine aminotransferase from Salmonella choleraesuis (strain SC-B67).